Consider the following 188-residue polypeptide: Elongation factor P (188 aa).

The protein belongs to the elongation factor P family.

The protein resides in the cytoplasm. It functions in the pathway protein biosynthesis; polypeptide chain elongation. Its function is as follows. Involved in peptide bond synthesis. Stimulates efficient translation and peptide-bond synthesis on native or reconstituted 70S ribosomes in vitro. Probably functions indirectly by altering the affinity of the ribosome for aminoacyl-tRNA, thus increasing their reactivity as acceptors for peptidyl transferase. This Rickettsia typhi (strain ATCC VR-144 / Wilmington) protein is Elongation factor P.